Consider the following 318-residue polypeptide: MANTLEQLKSYTTIVADTGDIEAIKRYQPEDATTNPSLILKAAQIPEYSALIDNAIAWAKLQSTDIEQQIDDASDKLAVNIGVEILKLVPGRISTEVDARLSFDKEKSIAKAHKLVRLYQEAGVDKSRILIKLASTWEGICAAKELEQEGINCNLTLLFSFSQARACAEAGVYLISPFVGRILDWYKKDTGKDYDAVNDPGVVSVTEIYNYYKQHGYNTVVMGASFRNIGEIIELAGCDRLTIGPSLLEELANSQLAIQPKLVPTSTTVAVAEPLTEAQFRWEFNQDAMAVDKLAEGIRNFAIDQGKLEVMLKAKLAN.

The Schiff-base intermediate with substrate role is filled by Lys-132.

It belongs to the transaldolase family. Type 1 subfamily. In terms of assembly, homodimer.

The protein resides in the cytoplasm. It carries out the reaction D-sedoheptulose 7-phosphate + D-glyceraldehyde 3-phosphate = D-erythrose 4-phosphate + beta-D-fructose 6-phosphate. It functions in the pathway carbohydrate degradation; pentose phosphate pathway; D-glyceraldehyde 3-phosphate and beta-D-fructose 6-phosphate from D-ribose 5-phosphate and D-xylulose 5-phosphate (non-oxidative stage): step 2/3. Its function is as follows. Transaldolase is important for the balance of metabolites in the pentose-phosphate pathway. This is Transaldolase from Shewanella oneidensis (strain ATCC 700550 / JCM 31522 / CIP 106686 / LMG 19005 / NCIMB 14063 / MR-1).